The chain runs to 170 residues: Myosin regulatory light chain 2, skeletal muscle isoform (170 aa).

Position 2 is a n,N,N-trimethylalanine (Ala2). 2 positions are modified to phosphoserine: Ser16 and Ser17. Phosphothreonine occurs at positions 26 and 36. The 36-residue stretch at 26-61 (TQIQEFKEAFTVIDQNRDGIIDKEDLRDTFAAMGRL) folds into the EF-hand 1 domain. Asp39, Asn41, Asp43, and Asp50 together coordinate Ca(2+). A Phosphoserine modification is found at Ser76. EF-hand domains lie at 96-131 (DPED…QCDR) and 132-167 (FSQE…GDAK). Thr102 carries the phosphothreonine modification.

Myosin is a hexamer of 2 heavy chains and 4 light chains.

In terms of biological role, plays a role in muscle contraction. This is Myosin regulatory light chain 2, skeletal muscle isoform from Bos taurus (Bovine).